The chain runs to 1948 residues: Chromodomain-helicase-DNA-binding protein 5 (1948 aa).

3 disordered regions span residues 1-136, 228-268, and 281-336; these read MRGP…SGQL, SPQQ…GRGK, and SKRK…GDGY. Composition is skewed to acidic residues over residues 17–37 and 71–89; these read EEME…EGFE and NDEL…ESEG. Basic residues-rich tracts occupy residues 95–114 and 250–268; these read TKKK…KRKK and GVRK…GRGK. Acidic residues predominate over residues 289 to 299; that stretch reads SEEDEPEDSDL. A compositionally biased stretch (basic residues) spans 319-328; the sequence is KKNKRRRKKK. 2 consecutive PHD-type zinc fingers follow at residues 341 to 388 and 414 to 461; these read QDYC…CEKE and MEFC…CTCP. The histone-binding stretch occupies residues 341–651; sequence QDYCEVCQQG…HRELMLGEDA (311 aa). The Chromo 1 domain maps to 495–552; it reads MPPPRPLEGIPEREFFVKWAGLSYWHCSWVKELQLELYHTVMYRNYQRKNDMDEPPPF. Residues 547 to 569 are disordered; the sequence is DEPPPFDYGSGDEDGKSEKRKNK. Basic and acidic residues predominate over residues 559-569; the sequence is EDGKSEKRKNK. In terms of domain architecture, Chromo 2 spans 590-651; it reads MMVHRILNHS…HRELMLGEDA (62 aa). The Helicase ATP-binding domain maps to 710-894; the sequence is RFSWAQGTDT…FHLLNFLTPE (185 aa). 723–730 is an ATP binding site; that stretch reads DEMGLGKT. The DEAH box motif lies at 845–848; the sequence is DEAH. The Helicase C-terminal domain maps to 1026 to 1191; the sequence is LLQKMLKKLR…MTKQELDDIL (166 aa). Disordered regions lie at residues 1206-1250, 1349-1409, 1521-1566, and 1595-1692; these read MMSQ…VEDS, YNDA…LPPL, KYST…LPDK, and TALD…EDKN. Composition is skewed to acidic residues over residues 1353-1364 and 1374-1383; these read SQEDQEWQDELS and SEDEDEDFEE. Position 1388 is an N5-methylglutamine (Gln1388). Positions 1547-1561 are enriched in pro residues; the sequence is TPVPASPAQLPPAPL. Position 1552 is a phosphoserine (Ser1552). 3 stretches are compositionally biased toward basic and acidic residues: residues 1598–1625, 1633–1650, and 1657–1672; these read DRVE…EVEK, PLKE…DKLE, and NDFR…KEPT.

It belongs to the SNF2/RAD54 helicase family. In terms of assembly, component of the nucleosome remodeling and deacetylase (NuRD) repressor complex, composed of core proteins MTA1, MTA2, MTA3, RBBP4, RBBP7, HDAC1, HDAC2, MBD2, MBD3, and peripherally associated proteins CDK2AP1, CDK2AP2, GATAD2A, GATAD2B, CHD3, CHD4 and CHD5. The exact stoichiometry of the NuRD complex is unknown, and some subunits such as MBD2 and MBD3, GATAD2A and GATAD2B, and CHD3, CHD4 and CHD5 define mutually exclusive NuRD complexes. Interacts with HDAC2. Methylated at Gln-1388 by N6AMT1. As to expression, expressed in brain regions enriched in neurons and not in regions rich in glial cells (at protein level).

Its subcellular location is the nucleus. It localises to the chromosome. It carries out the reaction ATP + H2O = ADP + phosphate + H(+). ATP-dependent chromatin-remodeling factor that binds DNA through histones and regulates gene transcription. May specifically recognize and bind trimethylated 'Lys-27' (H3K27me3) and non-methylated 'Lys-4' of histone H3. Acts as a component of the histone deacetylase NuRD complex which participates in the remodeling of chromatin. Plays a role in the development of the nervous system by activating the expression of genes promoting neuron terminal differentiation. In parallel, it may also positively regulate the trimethylation of histone H3 at 'Lys-27' thereby specifically repressing genes that promote the differentiation into non-neuronal cell lineages. Regulates the expression of genes involved in cell proliferation and differentiation. Downstream activated genes may include CDKN2A that positively regulates the p53/TP53 pathway, which in turn, prevents cell proliferation. In spermatogenesis, it probably regulates histone hyperacetylation and the replacement of histones by transition proteins in chromatin, a crucial step in the condensation of spermatid chromatin and the production of functional spermatozoa. The sequence is that of Chromodomain-helicase-DNA-binding protein 5 (Chd5) from Rattus norvegicus (Rat).